Here is a 135-residue protein sequence, read N- to C-terminus: Interleukin-4 (135 aa).

An N-terminal signal peptide occupies residues 1 to 24 (MGLTYQLIPVLVCLLVCTSHLVHG). 3 disulfides stabilise this stretch: Cys27-Cys135, Cys48-Cys85, and Cys70-Cys105. N-linked (GlcNAc...) asparagine glycosylation occurs at Asn62.

It belongs to the IL-4/IL-13 family.

It localises to the secreted. Functionally, participates in at least several B-cell activation processes as well as of other cell types. It is a costimulator of DNA-synthesis. It induces the expression of class II MHC molecules on resting B-cells. It enhances both secretion and cell surface expression of IgE and IgG1. It also regulates the expression of the low affinity Fc receptor for IgE (CD23) on both lymphocytes and monocytes. Positively regulates IL31RA expression in macrophages. Stimulates autophagy in dendritic cells by interfering with mTORC1 signaling and through the induction of RUFY4. This chain is Interleukin-4 (IL4), found in Bubalus bubalis (Domestic water buffalo).